Reading from the N-terminus, the 253-residue chain is Triosephosphate isomerase (253 aa).

Substrate-binding residues include Asn12 and Lys14. His96 (electrophile) is an active-site residue. The Proton acceptor role is filled by Glu169.

This sequence belongs to the triosephosphate isomerase family. As to quaternary structure, homodimer.

It is found in the cytoplasm. It carries out the reaction D-glyceraldehyde 3-phosphate = dihydroxyacetone phosphate. Its pathway is carbohydrate biosynthesis; gluconeogenesis. The protein operates within carbohydrate degradation; glycolysis; D-glyceraldehyde 3-phosphate from glycerone phosphate: step 1/1. In terms of biological role, antigen to the host M.1 monoclonal antibody. The sequence is that of Triosephosphate isomerase (TPI) from Schistosoma mansoni (Blood fluke).